Consider the following 352-residue polypeptide: N-acetyl-gamma-glutamyl-phosphate reductase (352 aa).

Cys-156 is an active-site residue.

It belongs to the NAGSA dehydrogenase family. Type 1 subfamily.

It localises to the cytoplasm. The catalysed reaction is N-acetyl-L-glutamate 5-semialdehyde + phosphate + NADP(+) = N-acetyl-L-glutamyl 5-phosphate + NADPH + H(+). Its pathway is amino-acid biosynthesis; L-arginine biosynthesis; N(2)-acetyl-L-ornithine from L-glutamate: step 3/4. Catalyzes the NADPH-dependent reduction of N-acetyl-5-glutamyl phosphate to yield N-acetyl-L-glutamate 5-semialdehyde. This is N-acetyl-gamma-glutamyl-phosphate reductase from Rhodospirillum rubrum (strain ATCC 11170 / ATH 1.1.1 / DSM 467 / LMG 4362 / NCIMB 8255 / S1).